The chain runs to 198 residues: Protein GrpE (198 aa).

Belongs to the GrpE family. In terms of assembly, homodimer.

The protein resides in the cytoplasm. Participates actively in the response to hyperosmotic and heat shock by preventing the aggregation of stress-denatured proteins, in association with DnaK and GrpE. It is the nucleotide exchange factor for DnaK and may function as a thermosensor. Unfolded proteins bind initially to DnaJ; upon interaction with the DnaJ-bound protein, DnaK hydrolyzes its bound ATP, resulting in the formation of a stable complex. GrpE releases ADP from DnaK; ATP binding to DnaK triggers the release of the substrate protein, thus completing the reaction cycle. Several rounds of ATP-dependent interactions between DnaJ, DnaK and GrpE are required for fully efficient folding. In Actinobacillus pleuropneumoniae serotype 7 (strain AP76), this protein is Protein GrpE.